A 141-amino-acid polypeptide reads, in one-letter code: Nucleoside diphosphate kinase (141 aa).

Residues lysine 11, phenylalanine 59, arginine 87, threonine 93, arginine 104, and asparagine 114 each coordinate ATP. Residue histidine 117 is the Pros-phosphohistidine intermediate of the active site.

This sequence belongs to the NDK family. As to quaternary structure, homotetramer. It depends on Mg(2+) as a cofactor.

The protein localises to the cytoplasm. The catalysed reaction is a 2'-deoxyribonucleoside 5'-diphosphate + ATP = a 2'-deoxyribonucleoside 5'-triphosphate + ADP. The enzyme catalyses a ribonucleoside 5'-diphosphate + ATP = a ribonucleoside 5'-triphosphate + ADP. Major role in the synthesis of nucleoside triphosphates other than ATP. The ATP gamma phosphate is transferred to the NDP beta phosphate via a ping-pong mechanism, using a phosphorylated active-site intermediate. The protein is Nucleoside diphosphate kinase of Pseudomonas fluorescens (strain SBW25).